The sequence spans 288 residues: Lipoyl synthase (288 aa).

[4Fe-4S] cluster is bound by residues cysteine 39, cysteine 44, cysteine 50, cysteine 65, cysteine 69, cysteine 72, and serine 276. A Radical SAM core domain is found at 51 to 265; the sequence is WGKGTATFMI…KETGLKKGFE (215 aa).

Belongs to the radical SAM superfamily. Lipoyl synthase family. [4Fe-4S] cluster is required as a cofactor.

It is found in the cytoplasm. It carries out the reaction [[Fe-S] cluster scaffold protein carrying a second [4Fe-4S](2+) cluster] + N(6)-octanoyl-L-lysyl-[protein] + 2 oxidized [2Fe-2S]-[ferredoxin] + 2 S-adenosyl-L-methionine + 4 H(+) = [[Fe-S] cluster scaffold protein] + N(6)-[(R)-dihydrolipoyl]-L-lysyl-[protein] + 4 Fe(3+) + 2 hydrogen sulfide + 2 5'-deoxyadenosine + 2 L-methionine + 2 reduced [2Fe-2S]-[ferredoxin]. It participates in protein modification; protein lipoylation via endogenous pathway; protein N(6)-(lipoyl)lysine from octanoyl-[acyl-carrier-protein]: step 2/2. Functionally, catalyzes the radical-mediated insertion of two sulfur atoms into the C-6 and C-8 positions of the octanoyl moiety bound to the lipoyl domains of lipoate-dependent enzymes, thereby converting the octanoylated domains into lipoylated derivatives. This Bacteroides fragilis (strain ATCC 25285 / DSM 2151 / CCUG 4856 / JCM 11019 / LMG 10263 / NCTC 9343 / Onslow / VPI 2553 / EN-2) protein is Lipoyl synthase.